We begin with the raw amino-acid sequence, 173 residues long: Peptide methionine sulfoxide reductase MsrA (173 aa).

C10 is a catalytic residue.

The protein belongs to the MsrA Met sulfoxide reductase family.

It carries out the reaction L-methionyl-[protein] + [thioredoxin]-disulfide + H2O = L-methionyl-(S)-S-oxide-[protein] + [thioredoxin]-dithiol. The catalysed reaction is [thioredoxin]-disulfide + L-methionine + H2O = L-methionine (S)-S-oxide + [thioredoxin]-dithiol. In terms of biological role, has an important function as a repair enzyme for proteins that have been inactivated by oxidation. Catalyzes the reversible oxidation-reduction of methionine sulfoxide in proteins to methionine. The sequence is that of Peptide methionine sulfoxide reductase MsrA from Psychrobacter cryohalolentis (strain ATCC BAA-1226 / DSM 17306 / VKM B-2378 / K5).